Here is a 487-residue protein sequence, read N- to C-terminus: Homeobox protein homothorax (487 aa).

Disordered stretches follow at residues 25–49, 210–292, and 333–369; these read YDPH…HMTH, DTTK…SSLN, and NFGT…QKKR. Residues 127 to 211 form the MEIS N-terminal domain; sequence GGDVCSSESF…IDLVIDERDT (85 aa). 2 stretches are compositionally biased toward polar residues: residues 227 to 237 and 333 to 345; these read NADSTSHTDGA and NFGT…ASNA. Positions 365–427 form a DNA-binding region, homeobox; TALE-type; sequence NQKKRGIFPK…NARRRIVQPM (63 aa).

This sequence belongs to the TALE/MEIS homeobox family. As to quaternary structure, interacts with exd; required for nuclear translocation of exd. As to expression, in the wing disk, the expression is present in the regions corresponding to notum, wing hinge and ventral pleura. In the leg disk, the expression is in the periphery region, corresponding to the proximal segments of the legs. In the antennal disk, the expression is in all but the arista region. In the eye disk, the expression is strong in the anterior region surrounding the eye field, including the regions corresponding to ptilinum, ocellus and head capsules, and weak in the posterior and lateral margins of the eye disk. Expressed specifically in maturating inner photoreceptors of the DRA and maintained through adulthood.

It is found in the nucleus. Functionally, all isoforms are required for patterning of the embryonic cuticle. Acts with exd to delimit the eye field and prevent inappropriate eye development. Isoforms that carry the homeodomain are required for proper localization of chordotonal organs within the peripheral nervous system and antennal identity; required to activate antennal-specific genes, such as sal and to repress the leg-like expression of dac. Necessary for the nuclear localization of the essential HOX cofactor, extradenticle (exd). Both necessary and sufficient for inner photoreceptors to adopt the polarization-sensitive 'dorsal rim area' (DRA) of the eye fate instead of the color-sensitive default state. This occurs by increasing rhabdomere size and uncoupling R7-R8 communication to allow both cells to express the same opsin rather than different ones as required for color vision. In Drosophila melanogaster (Fruit fly), this protein is Homeobox protein homothorax.